The primary structure comprises 1315 residues: Claspin (1315 aa).

Disordered regions lie at residues 22 to 276 (EAAD…AARL) and 345 to 474 (PADA…EQKT). Phosphoserine is present on residues Ser26, Ser42, Ser46, Ser53, Ser65, and Ser67. Residues 65–74 (SDSEAEDRDD) are compositionally biased toward acidic residues. The span at 91 to 101 (NLHSGKSQSRS) shows a compositional bias: polar residues. The segment covering 108–118 (DSDESDMEETP) has biased composition (acidic residues). Phosphoserine occurs at positions 109, 112, and 119. Over residues 119-128 (SQESPETQEA) the composition is skewed to polar residues. Composition is skewed to basic and acidic residues over residues 153 to 178 (LLREGAEGKAKSKRRLEKEERTMEKI) and 186 to 197 (TRCEESDADRPL). Residues 159–187 (EGKAKSKRRLEKEERTMEKIRRLKKKETR) are a coiled coil. Over residues 205–228 (EDSDLFETGLEEENDSALEDEESL) the composition is skewed to acidic residues. Ser220 carries the phosphoserine modification. A compositionally biased stretch (basic residues) spans 235 to 245 (VKNKVKNRKKK). Ser255 is modified (phosphoserine). 2 stretches are compositionally biased toward basic and acidic residues: residues 391–415 (ACGKDPVRRGELEIEETEKHSDDRP) and 455–470 (EELKTVEKTDAKEGMP). Ser522 is modified (phosphoserine). The stretch at 599 to 626 (EKLQMLKAKLQEAMKLRRLEERQKRQAL) forms a coiled coil. Residues 625–691 (ALFKLDNEDG…SSDIGKSVAL (67 aa)) form a disordered region. The segment covering 632 to 657 (EDGFEEEEEEEEMTDESEEDGEEETT) has biased composition (acidic residues). Positions 669–679 (KDEKETDKENT) are enriched in basic and acidic residues. Phosphoserine occurs at positions 698, 701, 709, 722, and 740. Residues 713-750 (MGYFPTEEKSETDEYLAKQSDKLDEDDSSSLLTKESSH) form a disordered region. Positions 741–750 (SSLLTKESSH) are enriched in low complexity. 5 positions are modified to phosphoserine: Ser785, Ser787, Ser810, Ser816, and Ser823. The residue at position 868 (Lys868) is an N6-acetyllysine. CKB motif repeat units follow at residues 887-896 (ELLDLCTGQF) and 917-926 (ELLNLCSGKF). Thr893 bears the Phosphothreonine; by CHEK1 mark. Disordered stretches follow at residues 924 to 1002 (GKFP…NDEE) and 1032 to 1052 (EDEAEVSGSDVGSEDEYDGEE). At Ser932 the chain carries Phosphoserine. Residues 954–963 (EALALCSGSF) form a CKB motif 3 repeat. The tract at residues 966–1063 (DREEEGEEEE…DEYEEDVIDE (98 aa)) is acidic patch. Composition is skewed to acidic residues over residues 967–977 (REEEGEEEEFG), 990–1002 (SDEDEHSDSNDEE), and 1043–1052 (GSEDEYDGEE). Phosphoserine is present on residues Ser990, Ser996, and Ser998. Positions 1001–1036 (EELALDLEDDEEELLKQSEKMKRQMRLKKYLEDEAE) form a coiled coil. 2 positions are modified to phosphoserine: Ser1133 and Ser1265. Residues 1264-1315 (LSPTKAEAAKDSSKPQVRRRGLSSMMSPSPKRLKTNGSSPGPKRSIFRYLES) are disordered.

This sequence belongs to the claspin family. In terms of assembly, interacts (phosphorylation-dependent) with CHEK1; regulates CLSPN function in checkpoint for DNA damage and replication. Interacts with ATR and RAD9A and these interactions are slightly reduced during checkpoint activation. Interacts with BRCA1 and this interaction increases during checkpoint activation. Interacts with TIMELESS; the interaction is required for leading-strand replication. Associates with the MCM2-7 complex and other replisome factors. Interacts (via the acidic patch) with CDC7; the interaction is required for phosphorylation of MCM proteins and CLASPIN by CDC7. Interacts with PCNA. Interacts with FZR1. Phosphorylated. Undergoes ATR-dependent phosphorylation by CHEK1 during activation of DNA replication or damage checkpoints. Phosphorylation by CSNK1G1/CK1 promotes CHEK1 binding. Phosphorylated by CDC7 during DNA replication, phosphorylation inhibits interaction between the acidic patch and N-terminal segments leading to increased binding to DNA and PCNA. Post-translationally, ubiquitinated by the anaphase promoting complex/cyclosome (APC/C) during G1 phase, leading to its degradation by the proteasome. Ubiquitination is mediated via its interaction with FZR1/CDH1. Following DNA damage, it is deubiquitinated by USP28 in G2 phase, preventing its degradation. In terms of processing, proteolytically cleaved by caspase-7 (CASP7) in response to apoptosis, leading to its inactivation.

It localises to the nucleus. In terms of biological role, required for checkpoint mediated cell cycle arrest in response to inhibition of DNA replication or to DNA damage induced by both ionizing and UV irradiation. Adapter protein which binds to BRCA1 and the checkpoint kinase CHEK1 and facilitates the ATR-dependent phosphorylation of both proteins. Also required to maintain normal rates of replication fork progression during unperturbed DNA replication. Binds directly to DNA, with particular affinity for branched or forked molecules and interacts with multiple protein components of the replisome such as the MCM2-7 complex and TIMELESS. Important for initiation of DNA replication, recruits kinase CDC7 to phosphorylate MCM2-7 components. The polypeptide is Claspin (Clspn) (Mus musculus (Mouse)).